Consider the following 347-residue polypeptide: 4-hydroxythreonine-4-phosphate dehydrogenase (347 aa).

The substrate site is built by histidine 137 and threonine 138. A divalent metal cation contacts are provided by histidine 174, histidine 219, and histidine 274. Lysine 282, asparagine 291, and arginine 300 together coordinate substrate.

It belongs to the PdxA family. In terms of assembly, homodimer. Zn(2+) is required as a cofactor. Mg(2+) serves as cofactor. It depends on Co(2+) as a cofactor.

It localises to the cytoplasm. It carries out the reaction 4-(phosphooxy)-L-threonine + NAD(+) = 3-amino-2-oxopropyl phosphate + CO2 + NADH. It functions in the pathway cofactor biosynthesis; pyridoxine 5'-phosphate biosynthesis; pyridoxine 5'-phosphate from D-erythrose 4-phosphate: step 4/5. Its function is as follows. Catalyzes the NAD(P)-dependent oxidation of 4-(phosphooxy)-L-threonine (HTP) into 2-amino-3-oxo-4-(phosphooxy)butyric acid which spontaneously decarboxylates to form 3-amino-2-oxopropyl phosphate (AHAP). In Cupriavidus pinatubonensis (strain JMP 134 / LMG 1197) (Cupriavidus necator (strain JMP 134)), this protein is 4-hydroxythreonine-4-phosphate dehydrogenase.